A 282-amino-acid polypeptide reads, in one-letter code: uncharacterized protein (282 aa).

This is an uncharacterized protein from Escherichia coli (strain K12).